The following is a 591-amino-acid chain: NADP-dependent malic enzyme (591 aa).

Tyrosine 139 functions as the Proton donor in the catalytic mechanism. Arginine 192 is an NAD(+) binding site. Lysine 210 functions as the Proton acceptor in the catalytic mechanism. The a divalent metal cation site is built by glutamate 282, aspartate 283, and aspartate 306. Aspartate 306 serves as a coordination point for NAD(+). 335–351 (LFLGAGEAGTGIAELIA) provides a ligand contact to NADP(+). An NAD(+)-binding site is contributed by asparagine 447.

This sequence belongs to the malic enzymes family. Homotetramer. The cofactor is Mg(2+). Mn(2+) is required as a cofactor.

The protein localises to the cytoplasm. The catalysed reaction is (S)-malate + NADP(+) = pyruvate + CO2 + NADPH. It carries out the reaction oxaloacetate + H(+) = pyruvate + CO2. This Vitis vinifera (Grape) protein is NADP-dependent malic enzyme.